The primary structure comprises 1276 residues: Histone-lysine N-methyltransferase PRDM16 (1276 aa).

Residues 1–10 (MRSKARARKL) are compositionally biased toward basic residues. Positions 1-68 (MRSKARARKL…DFTPKEGSPY (68 aa)) are disordered. In terms of domain architecture, SET spans 82–211 (ADFELRESSI…PGEELLVHVK (130 aa)). Residues 230–253 (FRCDECDELFQSKLDLRRHKKYTC) form a C2H2-type 1; atypical zinc finger. 5 C2H2-type zinc fingers span residues 281 to 303 (HECK…MVIH), 309 to 331 (YKCD…QMSH), 337 to 360 (FECE…RSQH), 366 to 388 (HACP…KHIH), and 394 to 416 (FICE…KRMH). The segment at 423–445 (IKCKDCGQMFSTTSSLNKHRRFC) adopts a C2H2-type 7; atypical zinc-finger fold. Disordered stretches follow at residues 533 to 657 (SLLK…APPG) and 772 to 804 (PFDL…QPLD). Over residues 561–570 (AVSNSSQGTT) the composition is skewed to polar residues. Residues 575–597 (PEEKFESRLEDSCVEKLKTRSSD) are compositionally biased toward basic and acidic residues. The segment covering 609–624 (TTTGTDLDTTTGTGSD) has biased composition (low complexity). A compositionally biased stretch (basic and acidic residues) spans 632 to 642 (DPDKDKGKGKS). Residues 679 to 1038 (DEQLLTATGA…KHEHENAPVS (360 aa)) are interaction with CTBP1, CTBP2 and ZNF516. Residues 739–1276 (PFTDRALAHN…SGAFHPINHL (538 aa)) form a mediates interaction with SKI and regulation of TGF-beta signaling region. 3 C2H2-type zinc fingers span residues 951-973 (YTCR…LRTH), 979-1002 (YRCK…RNIH), and 1008-1032 (FKCH…KHEH). Disordered regions lie at residues 1033–1065 (ENAP…HALL) and 1105–1163 (AQCP…EPAA). Residues 1047–1058 (HLGTSASSPTSE) show a composition bias toward polar residues. The span at 1116–1133 (EDVEEEDDDDLEEDDEDS) shows a compositional bias: acidic residues.

It belongs to the PRDM16 family. As to quaternary structure, interacts with CEBPA, CEBPB and CEBPD; the interaction is direct. Interacts with PPARG and PPARA; controls brown adipocytes differentiation. Interacts with CTBP1 and CTBP2; represses the expression of WAT-specific genes. Interacts with PPARGC1A and PPARGC1B; interaction with PPARGC1A or PPARGC1B activates the transcription of BAT-specific gene. Interacts with HDAC1, SKI, SMAD2 and SMAD3; the interaction with SKI promotes the recruitment of SMAD3-HDAC1 complex on the promoter of TGF-beta target genes. Interacts with ZNF516; the interaction is direct and may play a role in the transcription of brown adipose tissue-specific gene. Expressed in uterus and kidney. Expressed in both cardiomyocytes and interstitial cells.

Its subcellular location is the nucleus. It localises to the cytoplasm. It catalyses the reaction L-lysyl(9)-[histone H3] + S-adenosyl-L-methionine = N(6)-methyl-L-lysyl(9)-[histone H3] + S-adenosyl-L-homocysteine + H(+). Binds DNA and functions as a transcriptional regulator. Displays histone methyltransferase activity and monomethylates 'Lys-9' of histone H3 (H3K9me1) in vitro. Probably catalyzes the monomethylation of free histone H3 in the cytoplasm which is then transported to the nucleus and incorporated into nucleosomes where SUV39H methyltransferases use it as a substrate to catalyze histone H3 'Lys-9' trimethylation. Likely to be one of the primary histone methyltransferases along with MECOM/PRDM3 that direct cytoplasmic H3K9me1 methylation. Functions in the differentiation of brown adipose tissue (BAT) which is specialized in dissipating chemical energy in the form of heat in response to cold or excess feeding while white adipose tissue (WAT) is specialized in the storage of excess energy and the control of systemic metabolism. Together with CEBPB, regulates the differentiation of myoblastic precursors into brown adipose cells. Functions as a repressor of TGF-beta signaling. In terms of biological role, binds DNA and functions as a transcriptional regulator. Functions as a repressor of TGF-beta signaling. May regulate granulocyte differentiation. The protein is Histone-lysine N-methyltransferase PRDM16 of Homo sapiens (Human).